The sequence spans 263 residues: Pyrroline-5-carboxylate reductase (263 aa).

The protein belongs to the pyrroline-5-carboxylate reductase family.

Its subcellular location is the cytoplasm. It catalyses the reaction L-proline + NADP(+) = (S)-1-pyrroline-5-carboxylate + NADPH + 2 H(+). It carries out the reaction L-proline + NAD(+) = (S)-1-pyrroline-5-carboxylate + NADH + 2 H(+). The protein operates within amino-acid biosynthesis; L-proline biosynthesis; L-proline from L-glutamate 5-semialdehyde: step 1/1. Catalyzes the reduction of 1-pyrroline-5-carboxylate (PCA) to L-proline. This chain is Pyrroline-5-carboxylate reductase, found in Treponema pallidum (strain Nichols).